We begin with the raw amino-acid sequence, 329 residues long: Vitamin B12 import system permease protein BtuC (329 aa).

9 consecutive transmembrane segments (helical) span residues 22–42 (LSVL…QWIA), 64–84 (LAVL…QALF), 91–111 (PGLL…VLLG), 115–135 (LPGW…TLIL), 149–169 (LLAG…AIYF), 187–207 (GGVD…SLWI), 243–263 (GWMV…GLVI), 277–297 (ALLP…DVIA), and 305–325 (ELPI…WLLL).

Belongs to the binding-protein-dependent transport system permease family. FecCD subfamily. As to quaternary structure, the complex is composed of two ATP-binding proteins (BtuD), two transmembrane proteins (BtuC) and a solute-binding protein (BtuF).

The protein localises to the cell inner membrane. In terms of biological role, part of the ABC transporter complex BtuCDF involved in vitamin B12 import. Involved in the translocation of the substrate across the membrane. The polypeptide is Vitamin B12 import system permease protein BtuC (Citrobacter koseri (strain ATCC BAA-895 / CDC 4225-83 / SGSC4696)).